The following is a 257-amino-acid chain: MIELKNVSKVYPNGVIGLDNINLTIEKGEFVAIVGLSGAGKSTLLRAMNRLIDISDGDIMINRRSITSASGKELRMMRRDIGMIFQNFNLVKRSTVLRNVLSGRVAHNHTFRTLFNLFPQKDVDLALQSLERVNILEKAYTRSSQLSGGQQQRVSIARALAQEAKMILADEPTASLDPVTTKQVMDDLKKINTEDQVTVVINLHFVDLAREYATRIIGLRDGKVVFDGPAQRATDEVFKDIYGRPLKEDELLGKEVG.

Residues Ile2–Leu246 enclose the ABC transporter domain. ATP is bound at residue Gly35–Ser42.

It belongs to the ABC transporter superfamily. Phosphonates importer (TC 3.A.1.9.1) family. The complex is composed of two ATP-binding proteins (PhnC), two transmembrane proteins (PhnE) and a solute-binding protein (PhnD).

Its subcellular location is the cell membrane. It carries out the reaction phosphonate(out) + ATP + H2O = phosphonate(in) + ADP + phosphate + H(+). Functionally, part of the ABC transporter complex PhnCDE involved in phosphonates import. Responsible for energy coupling to the transport system. This is Phosphonates import ATP-binding protein PhnC 1 from Halalkalibacterium halodurans (strain ATCC BAA-125 / DSM 18197 / FERM 7344 / JCM 9153 / C-125) (Bacillus halodurans).